The chain runs to 441 residues: GTPase Der (441 aa).

EngA-type G domains lie at proline 3–threonine 167 and threonine 176–alanine 351. GTP is bound by residues glycine 9–serine 16, aspartate 56–phenylalanine 60, asparagine 119–aspartate 122, glycine 182–serine 189, aspartate 229–isoleucine 233, and asparagine 294–aspartate 297. The region spanning lysine 352–glutamate 436 is the KH-like domain.

The protein belongs to the TRAFAC class TrmE-Era-EngA-EngB-Septin-like GTPase superfamily. EngA (Der) GTPase family. Associates with the 50S ribosomal subunit.

In terms of biological role, GTPase that plays an essential role in the late steps of ribosome biogenesis. The polypeptide is GTPase Der (Geotalea daltonii (strain DSM 22248 / JCM 15807 / FRC-32) (Geobacter daltonii)).